Here is a 552-residue protein sequence, read N- to C-terminus: Urocanate hydratase (552 aa).

NAD(+) is bound by residues 49–50, Gln-127, 173–175, Asp-193, 239–240, 260–264, 270–271, and Tyr-319; these read GG, GMG, NA, QTSAH, and YI. Cys-407 is an active-site residue. Residue Gly-489 coordinates NAD(+).

It belongs to the urocanase family. The cofactor is NAD(+).

It is found in the cytoplasm. The enzyme catalyses 4-imidazolone-5-propanoate = trans-urocanate + H2O. It functions in the pathway amino-acid degradation; L-histidine degradation into L-glutamate; N-formimidoyl-L-glutamate from L-histidine: step 2/3. Functionally, catalyzes the conversion of urocanate to 4-imidazolone-5-propionate. This chain is Urocanate hydratase, found in Bacillus cereus (strain AH187).